A 766-amino-acid polypeptide reads, in one-letter code: Phosphoribosylformylglycinamidine synthase subunit PurL (766 aa).

The active site involves His-46. Residues Tyr-49 and Lys-88 each contribute to the ATP site. Glu-90 contributes to the Mg(2+) binding site. Residues 91 to 94 and Arg-113 each bind substrate; that span reads SHNH. The Proton acceptor role is filled by His-92. Asp-114 serves as a coordination point for Mg(2+). Gln-237 contributes to the substrate binding site. Position 265 (Asp-265) interacts with Mg(2+). Position 309–311 (309–311) interacts with substrate; it reads ESQ. Residues Asp-520 and Gly-557 each contribute to the ATP site. Asn-558 is a binding site for Mg(2+). Ser-560 serves as a coordination point for substrate.

It belongs to the FGAMS family. Monomer. Part of the FGAM synthase complex composed of 1 PurL, 1 PurQ and 2 PurS subunits.

The protein localises to the cytoplasm. The catalysed reaction is N(2)-formyl-N(1)-(5-phospho-beta-D-ribosyl)glycinamide + L-glutamine + ATP + H2O = 2-formamido-N(1)-(5-O-phospho-beta-D-ribosyl)acetamidine + L-glutamate + ADP + phosphate + H(+). Its pathway is purine metabolism; IMP biosynthesis via de novo pathway; 5-amino-1-(5-phospho-D-ribosyl)imidazole from N(2)-formyl-N(1)-(5-phospho-D-ribosyl)glycinamide: step 1/2. Part of the phosphoribosylformylglycinamidine synthase complex involved in the purines biosynthetic pathway. Catalyzes the ATP-dependent conversion of formylglycinamide ribonucleotide (FGAR) and glutamine to yield formylglycinamidine ribonucleotide (FGAM) and glutamate. The FGAM synthase complex is composed of three subunits. PurQ produces an ammonia molecule by converting glutamine to glutamate. PurL transfers the ammonia molecule to FGAR to form FGAM in an ATP-dependent manner. PurS interacts with PurQ and PurL and is thought to assist in the transfer of the ammonia molecule from PurQ to PurL. The sequence is that of Phosphoribosylformylglycinamidine synthase subunit PurL from Synechococcus sp. (strain JA-3-3Ab) (Cyanobacteria bacterium Yellowstone A-Prime).